A 115-amino-acid polypeptide reads, in one-letter code: Galanin-like peptide (115 aa).

Positions 1 to 23 (MAPSVPLVLLLVLLLSLAETPAS) are cleaved as a signal peptide. A propeptide spanning residues 86–115 (NVMEAFAKPEIGDLDVLSKKIPKEEDVLKS) is cleaved from the precursor.

It belongs to the galanin family. In terms of tissue distribution, hypothalamus and pituitary gland.

The protein resides in the secreted. Hypothalamic neuropeptide which binds to the G-protein-coupled galanin receptors (GALR1, GALR2 and GALR3). Involved in a large number of putative physiological functions in CNS homeostatic processes, including the regulation of gonadotropin-releasing hormone secretion. In terms of biological role, exhibits potent and dose-dependent vasoconstrictor and anti-edema activity in the cutaneous microvasculature, a physiologic effects which does not appear to be mediated via GALR1 or GALR2. Exhibits antimicrobial activity against Gram-negative bacterias, inducing bacterial membrane blebbing. This chain is Galanin-like peptide (GALP), found in Macaca nemestrina (Pig-tailed macaque).